A 520-amino-acid chain; its full sequence is GMP synthase [glutamine-hydrolyzing] (520 aa).

Positions 12–205 (KIIVLDYGSQ…AISICGARGD (194 aa)) constitute a Glutamine amidotransferase type-1 domain. Cys89 serves as the catalytic Nucleophile. Active-site residues include His179 and Glu181. One can recognise a GMPS ATP-PPase domain in the interval 206-395 (WSMDNFIDME…LGMPEEIVWR (190 aa)). 233–239 (SGGVDSS) lines the ATP pocket.

As to quaternary structure, homodimer.

The enzyme catalyses XMP + L-glutamine + ATP + H2O = GMP + L-glutamate + AMP + diphosphate + 2 H(+). It participates in purine metabolism; GMP biosynthesis; GMP from XMP (L-Gln route): step 1/1. Catalyzes the synthesis of GMP from XMP. In Streptococcus pyogenes serotype M5 (strain Manfredo), this protein is GMP synthase [glutamine-hydrolyzing].